The chain runs to 229 residues: NAD(P)H-hydrate epimerase (229 aa).

Residues Ala10–Leu217 enclose the YjeF N-terminal domain. Asn60–Asp64 provides a ligand contact to (6S)-NADPHX. K(+)-binding residues include Asn61 and Asp125. (6S)-NADPHX-binding positions include Gly129–Pro135 and Asp158. K(+) is bound at residue Ser161.

Belongs to the NnrE/AIBP family. K(+) is required as a cofactor.

The enzyme catalyses (6R)-NADHX = (6S)-NADHX. It catalyses the reaction (6R)-NADPHX = (6S)-NADPHX. Catalyzes the epimerization of the S- and R-forms of NAD(P)HX, a damaged form of NAD(P)H that is a result of enzymatic or heat-dependent hydration. This is a prerequisite for the S-specific NAD(P)H-hydrate dehydratase to allow the repair of both epimers of NAD(P)HX. The polypeptide is NAD(P)H-hydrate epimerase (Drosophila mojavensis (Fruit fly)).